The chain runs to 428 residues: Enolase (428 aa).

Q162 contributes to the (2R)-2-phosphoglycerate binding site. The active-site Proton donor is E204. Mg(2+)-binding residues include D241, E288, and D315. Positions 340, 369, 370, and 391 each coordinate (2R)-2-phosphoglycerate. K340 (proton acceptor) is an active-site residue.

This sequence belongs to the enolase family. Mg(2+) serves as cofactor.

It is found in the cytoplasm. It localises to the secreted. The protein resides in the cell surface. It carries out the reaction (2R)-2-phosphoglycerate = phosphoenolpyruvate + H2O. Its pathway is carbohydrate degradation; glycolysis; pyruvate from D-glyceraldehyde 3-phosphate: step 4/5. In terms of biological role, catalyzes the reversible conversion of 2-phosphoglycerate (2-PG) into phosphoenolpyruvate (PEP). It is essential for the degradation of carbohydrates via glycolysis. The sequence is that of Enolase from Azobacteroides pseudotrichonymphae genomovar. CFP2.